The following is a 183-amino-acid chain: Gamma-crystallin N (183 aa).

Beta/gamma crystallin 'Greek key' domains follow at residues Gly-6–Ser-46, Gly-47–Gly-89, Phe-95–Gly-136, and Gly-138–Leu-180.

This sequence belongs to the beta/gamma-crystallin family. In terms of assembly, monomer. As to expression, primordially eye-specific. Present in lens nucleus. In the retina, expression in observed in the outer plexiform layer (containing photoreceptors axons and synapses) and photoreceptor outer segments (at protein level). Also detected in the auditory hindbrain where it is highly expressed in the medial nucleus of the trapezoid body, but also present in other nuclei of the superior olivary complex.

In terms of biological role, crystallins are the dominant structural components of the vertebrate eye lens. Also plays an important role for integrity and function of auditory nuclei. This chain is Gamma-crystallin N, found in Mus musculus (Mouse).